The following is a 709-amino-acid chain: Polyribonucleotide nucleotidyltransferase (709 aa).

The Mg(2+) site is built by Asp-485 and Asp-491. A KH domain is found at 552–611; that stretch reads PRIYTMKIDPKKIKDVIGKGGATIRSLTEETGTSIDIDDDGTVKIAAVDSNAAKNVMGRI. The S1 motif domain maps to 621–689; sequence GAIYKGKVTR…RQGRIRLTMK (69 aa).

This sequence belongs to the polyribonucleotide nucleotidyltransferase family. As to quaternary structure, component of the RNA degradosome, which is a multiprotein complex involved in RNA processing and mRNA degradation. The cofactor is Mg(2+).

It is found in the cytoplasm. The enzyme catalyses RNA(n+1) + phosphate = RNA(n) + a ribonucleoside 5'-diphosphate. Involved in mRNA degradation. Catalyzes the phosphorolysis of single-stranded polyribonucleotides processively in the 3'- to 5'-direction. In Haemophilus influenzae (strain PittGG), this protein is Polyribonucleotide nucleotidyltransferase.